The following is a 465-amino-acid chain: 23S rRNA (uracil(1939)-C(5))-methyltransferase RlmD (465 aa).

Residues 1 to 22 (MSEAVPTSARKSRNAPVAPGPA) form a disordered region. Positions 16–80 (PVAPGPAPVL…PSYEQATVVD (65 aa)) constitute a TRAM domain. [4Fe-4S] cluster is bound by residues C93, C99, C102, and C181. Positions 289, 318, 323, 339, 367, and 388 each coordinate S-adenosyl-L-methionine. C421 functions as the Nucleophile in the catalytic mechanism.

This sequence belongs to the class I-like SAM-binding methyltransferase superfamily. RNA M5U methyltransferase family. RlmD subfamily.

The catalysed reaction is uridine(1939) in 23S rRNA + S-adenosyl-L-methionine = 5-methyluridine(1939) in 23S rRNA + S-adenosyl-L-homocysteine + H(+). Catalyzes the formation of 5-methyl-uridine at position 1939 (m5U1939) in 23S rRNA. This Burkholderia lata (strain ATCC 17760 / DSM 23089 / LMG 22485 / NCIMB 9086 / R18194 / 383) protein is 23S rRNA (uracil(1939)-C(5))-methyltransferase RlmD.